Here is a 100-residue protein sequence, read N- to C-terminus: Aspartyl/glutamyl-tRNA(Asn/Gln) amidotransferase subunit C (100 aa).

It belongs to the GatC family. Heterotrimer of A, B and C subunits.

The enzyme catalyses L-glutamyl-tRNA(Gln) + L-glutamine + ATP + H2O = L-glutaminyl-tRNA(Gln) + L-glutamate + ADP + phosphate + H(+). The catalysed reaction is L-aspartyl-tRNA(Asn) + L-glutamine + ATP + H2O = L-asparaginyl-tRNA(Asn) + L-glutamate + ADP + phosphate + 2 H(+). Its function is as follows. Allows the formation of correctly charged Asn-tRNA(Asn) or Gln-tRNA(Gln) through the transamidation of misacylated Asp-tRNA(Asn) or Glu-tRNA(Gln) in organisms which lack either or both of asparaginyl-tRNA or glutaminyl-tRNA synthetases. The reaction takes place in the presence of glutamine and ATP through an activated phospho-Asp-tRNA(Asn) or phospho-Glu-tRNA(Gln). The chain is Aspartyl/glutamyl-tRNA(Asn/Gln) amidotransferase subunit C from Streptococcus pyogenes serotype M18 (strain MGAS8232).